The sequence spans 380 residues: 1-deoxy-D-xylulose 5-phosphate reductoisomerase (380 aa).

8 residues coordinate NADPH: Thr-10, Gly-11, Ser-12, Ile-13, Gly-35, Arg-36, Asn-37, and Asn-121. Residue Lys-122 coordinates 1-deoxy-D-xylulose 5-phosphate. Glu-123 contacts NADPH. Asp-147 is a Mn(2+) binding site. Residues Ser-148, Glu-149, Ser-173, and His-196 each coordinate 1-deoxy-D-xylulose 5-phosphate. Position 149 (Glu-149) interacts with Mn(2+). An NADPH-binding site is contributed by Gly-202. 1-deoxy-D-xylulose 5-phosphate is bound by residues Ser-209, Asn-214, Lys-215, and Glu-218. Glu-218 is a Mn(2+) binding site.

The protein belongs to the DXR family. Mg(2+) is required as a cofactor. It depends on Mn(2+) as a cofactor.

It catalyses the reaction 2-C-methyl-D-erythritol 4-phosphate + NADP(+) = 1-deoxy-D-xylulose 5-phosphate + NADPH + H(+). Its pathway is isoprenoid biosynthesis; isopentenyl diphosphate biosynthesis via DXP pathway; isopentenyl diphosphate from 1-deoxy-D-xylulose 5-phosphate: step 1/6. In terms of biological role, catalyzes the NADPH-dependent rearrangement and reduction of 1-deoxy-D-xylulose-5-phosphate (DXP) to 2-C-methyl-D-erythritol 4-phosphate (MEP). The chain is 1-deoxy-D-xylulose 5-phosphate reductoisomerase from Agathobacter rectalis (strain ATCC 33656 / DSM 3377 / JCM 17463 / KCTC 5835 / VPI 0990) (Eubacterium rectale).